The following is a 649-amino-acid chain: Acetyl-coenzyme A synthetase (649 aa).

CoA-binding positions include 190-193 (RGGR) and Thr310. ATP is bound by residues 386-388 (GEP), 410-415 (DTWWQT), Asp499, and Arg514. A CoA-binding site is contributed by Ser522. An ATP-binding site is contributed by Arg525. Residues Val536, His538, and Val541 each contribute to the Mg(2+) site. Arg583 contributes to the CoA binding site. Position 608 is an N6-acetyllysine (Lys608).

The protein belongs to the ATP-dependent AMP-binding enzyme family. The cofactor is Mg(2+). Post-translationally, acetylated. Deacetylation by the SIR2-homolog deacetylase activates the enzyme.

It catalyses the reaction acetate + ATP + CoA = acetyl-CoA + AMP + diphosphate. In terms of biological role, catalyzes the conversion of acetate into acetyl-CoA (AcCoA), an essential intermediate at the junction of anabolic and catabolic pathways. AcsA undergoes a two-step reaction. In the first half reaction, AcsA combines acetate with ATP to form acetyl-adenylate (AcAMP) intermediate. In the second half reaction, it can then transfer the acetyl group from AcAMP to the sulfhydryl group of CoA, forming the product AcCoA. The sequence is that of Acetyl-coenzyme A synthetase from Methylorubrum populi (strain ATCC BAA-705 / NCIMB 13946 / BJ001) (Methylobacterium populi).